Consider the following 605-residue polypeptide: Sulfite reductase [NADPH] flavoprotein alpha-component (605 aa).

A Flavodoxin-like domain is found at 68 to 206 (VTVLYGSQTG…PAAEWLEGVL (139 aa)). Residues 74–78 (SQTGN), 121–126 (STHGEG), and 154–185 (VLAL…KRIS) contribute to the FMN site. A disordered region spans residues 213–234 (GGGSAAPAPAAASQTGESSYSR). Residues 235-454 (TNPFRAEVLE…VQHNQNFKLP (220 aa)) form the FAD-binding FR-type domain. Residue 392–395 (RLYS) coordinates FAD. NADP(+) is bound by residues Asp495 and 525 to 533 (SRDTEEKVY).

As to quaternary structure, alpha(8)-beta(8). The alpha component is a flavoprotein, the beta component is a hemoprotein. It depends on FAD as a cofactor. The cofactor is FMN.

It catalyses the reaction hydrogen sulfide + 3 NADP(+) + 3 H2O = sulfite + 3 NADPH + 4 H(+). The protein operates within sulfur metabolism; hydrogen sulfide biosynthesis; hydrogen sulfide from sulfite (NADPH route): step 1/1. In terms of biological role, component of the sulfite reductase complex that catalyzes the 6-electron reduction of sulfite to sulfide. This is one of several activities required for the biosynthesis of L-cysteine from sulfate. The flavoprotein component catalyzes the electron flow from NADPH -&gt; FAD -&gt; FMN to the hemoprotein component. This chain is Sulfite reductase [NADPH] flavoprotein alpha-component (cysJ), found in Bacillus subtilis (strain 168).